The following is a 37-amino-acid chain: Cytochrome b6-f complex subunit 5 (37 aa).

Residues 5 to 25 (LLFGIVLGLIPVTLVGLFVAA) form a helical membrane-spanning segment.

This sequence belongs to the PetG family. The 4 large subunits of the cytochrome b6-f complex are cytochrome b6, subunit IV (17 kDa polypeptide, PetD), cytochrome f and the Rieske protein, while the 4 small subunits are PetG, PetL, PetM and PetN. The complex functions as a dimer.

It localises to the plastid. The protein localises to the chloroplast thylakoid membrane. In terms of biological role, component of the cytochrome b6-f complex, which mediates electron transfer between photosystem II (PSII) and photosystem I (PSI), cyclic electron flow around PSI, and state transitions. PetG is required for either the stability or assembly of the cytochrome b6-f complex. This is Cytochrome b6-f complex subunit 5 from Rhodomonas salina (Cryptomonas salina).